Reading from the N-terminus, the 179-residue chain is Large ribosomal subunit protein uL5 (179 aa).

It belongs to the universal ribosomal protein uL5 family. Part of the 50S ribosomal subunit; part of the 5S rRNA/L5/L18/L25 subcomplex. Contacts the 5S rRNA and the P site tRNA. Forms a bridge to the 30S subunit in the 70S ribosome.

Its function is as follows. This is one of the proteins that bind and probably mediate the attachment of the 5S RNA into the large ribosomal subunit, where it forms part of the central protuberance. In the 70S ribosome it contacts protein S13 of the 30S subunit (bridge B1b), connecting the 2 subunits; this bridge is implicated in subunit movement. Contacts the P site tRNA; the 5S rRNA and some of its associated proteins might help stabilize positioning of ribosome-bound tRNAs. This Acidovorax ebreus (strain TPSY) (Diaphorobacter sp. (strain TPSY)) protein is Large ribosomal subunit protein uL5.